Here is a 212-residue protein sequence, read N- to C-terminus: Thymidylate kinase (212 aa).

10–17 (GIDGCGKT) provides a ligand contact to ATP.

This sequence belongs to the thymidylate kinase family.

It carries out the reaction dTMP + ATP = dTDP + ADP. Functionally, phosphorylation of dTMP to form dTDP in both de novo and salvage pathways of dTTP synthesis. The polypeptide is Thymidylate kinase (Prochlorococcus marinus (strain AS9601)).